The following is a 64-amino-acid chain: Large ribosomal subunit protein bL35 (64 aa).

The segment at 1–56 (MPKMKSNKSVAARFKLTGSGQLKRTRPGKRHKLSKKSSQEKRNLSKQPLVDKGQVG) is disordered. Basic residues predominate over residues 23–35 (KRTRPGKRHKLSK).

This sequence belongs to the bacterial ribosomal protein bL35 family.

This is Large ribosomal subunit protein bL35 from Chlamydia abortus (strain DSM 27085 / S26/3) (Chlamydophila abortus).